The chain runs to 181 residues: Bifunctional protein PyrR (181 aa).

Residues 101 to 113 (VIVVDDVLYTGRT) carry the PRPP-binding motif.

The protein belongs to the purine/pyrimidine phosphoribosyltransferase family. PyrR subfamily. Homodimer and homohexamer; in equilibrium.

It carries out the reaction UMP + diphosphate = 5-phospho-alpha-D-ribose 1-diphosphate + uracil. Its function is as follows. Regulates transcriptional attenuation of the pyrimidine nucleotide (pyr) operon by binding in a uridine-dependent manner to specific sites on pyr mRNA. This disrupts an antiterminator hairpin in the RNA and favors formation of a downstream transcription terminator, leading to a reduced expression of downstream genes. In terms of biological role, also displays a weak uracil phosphoribosyltransferase activity which is not physiologically significant. The chain is Bifunctional protein PyrR from Bacillus velezensis (strain DSM 23117 / BGSC 10A6 / LMG 26770 / FZB42) (Bacillus amyloliquefaciens subsp. plantarum).